A 122-amino-acid polypeptide reads, in one-letter code: UPF0102 protein CLL_A1253 (122 aa).

Belongs to the UPF0102 family.

The sequence is that of UPF0102 protein CLL_A1253 from Clostridium botulinum (strain Eklund 17B / Type B).